A 199-amino-acid polypeptide reads, in one-letter code: GTP cyclohydrolase-2 (199 aa).

49-53 (RIHSE) is a GTP binding site. Zn(2+)-binding residues include Cys-54, Cys-65, and Cys-67. GTP is bound by residues Gln-70, 92–94 (EGR), and Thr-114. Catalysis depends on Asp-126, which acts as the Proton acceptor. The active-site Nucleophile is the Arg-128. GTP contacts are provided by Thr-149 and Lys-154.

This sequence belongs to the GTP cyclohydrolase II family. As to quaternary structure, homodimer. Zn(2+) is required as a cofactor.

It catalyses the reaction GTP + 4 H2O = 2,5-diamino-6-hydroxy-4-(5-phosphoribosylamino)-pyrimidine + formate + 2 phosphate + 3 H(+). Its pathway is cofactor biosynthesis; riboflavin biosynthesis; 5-amino-6-(D-ribitylamino)uracil from GTP: step 1/4. In terms of biological role, catalyzes the conversion of GTP to 2,5-diamino-6-ribosylamino-4(3H)-pyrimidinone 5'-phosphate (DARP), formate and pyrophosphate. In Blochmanniella pennsylvanica (strain BPEN), this protein is GTP cyclohydrolase-2.